The sequence spans 456 residues: Bestrophin homolog 18 (456 aa).

A run of 4 helical transmembrane segments spans residues W29–I49, G83–I103, I234–A254, and M267–L287. The tract at residues A416–K456 is disordered.

Belongs to the anion channel-forming bestrophin (TC 1.A.46) family. Calcium-sensitive chloride channel subfamily. In terms of assembly, forms oligomers.

It localises to the cell membrane. Its function is as follows. Forms chloride channels. This chain is Bestrophin homolog 18 (best-18), found in Caenorhabditis elegans.